We begin with the raw amino-acid sequence, 50 residues long: Bacterioferritin (50 aa).

Residues 1-50 (MKGDPKVIDYLNKALRHELTAINQYWLHYRLLDNWGIKDLAKKWRAESIE) form the Ferritin-like diiron domain. Fe cation is bound at residue Glu-18.

It belongs to the bacterioferritin family. Homooligomer of 24 subunits, arranged as 12 dimers, that are packed together to form an approximately spherical molecule with a central cavity, in which large amounts of iron can be deposited. Heme b serves as cofactor.

The catalysed reaction is 4 Fe(2+) + O2 + 4 H(+) = 4 Fe(3+) + 2 H2O. It carries out the reaction Fe(2+)(in) = Fe(2+)(out). Functionally, iron-storage protein, whose ferroxidase center binds Fe(2+), oxidizes it using dioxygen to Fe(3+), and participates in the subsequent Fe(3+) oxide mineral core formation within the central cavity of the BFR protein shell. May act as one of the electron carriers in the reverse electron-transport system from cytochrome c-552 to NADP(+). The sequence is that of Bacterioferritin (bfr) from Nitrobacter winogradskyi (Nitrobacter agilis).